We begin with the raw amino-acid sequence, 1144 residues long: Alpha-mannosidase 2 (1144 aa).

The Cytoplasmic segment spans residues methionine 1–arginine 5. The helical; Signal-anchor for type II membrane protein transmembrane segment at glutamine 6–leucine 26 threads the bilayer. Residues aspartate 27–arginine 1144 lie on the Lumenal side of the membrane. N-linked (GlcNAc...) asparagine glycosylation occurs at asparagine 78. Residues serine 80 and serine 82 each carry the phosphoserine modification. N-linked (GlcNAc...) asparagine glycosylation is present at asparagine 93. 4 residues coordinate Zn(2+): histidine 175, aspartate 177, aspartate 289, and histidine 569. The Nucleophile role is filled by aspartate 289. Asparagine 1125 is a glycosylation site (N-linked (GlcNAc...) asparagine).

Belongs to the glycosyl hydrolase 38 family. Homodimer; disulfide-linked. Requires Zn(2+) as cofactor. Post-translationally, glycosylated.

It is found in the golgi apparatus membrane. The catalysed reaction is N(4)-{beta-D-GlcNAc-(1-&gt;2)-alpha-D-Man-(1-&gt;3)-[alpha-D-Man-(1-&gt;3)-[alpha-D-Man-(1-&gt;6)]-alpha-D-Man-(1-&gt;6)]-beta-D-Man-(1-&gt;4)-beta-D-GlcNAc-(1-&gt;4)-beta-D-GlcNAc}-L-asparaginyl-[protein] + 2 H2O = 2 alpha-D-mannopyranose + an N(4)-{beta-D-GlcNAc-(1-&gt;2)-alpha-D-Man-(1-&gt;3)-[alpha-D-Man-(1-&gt;6)]-beta-D-Man-(1-&gt;4)-beta-D-GlcNAc-(1-&gt;4)-beta-D-GlcNAc}-L-asparaginyl-[protein]. The protein operates within protein modification; protein glycosylation. Functionally, catalyzes the first committed step in the biosynthesis of complex N-glycans. It controls conversion of high mannose to complex N-glycans; the final hydrolytic step in the N-glycan maturation pathway. The polypeptide is Alpha-mannosidase 2 (MAN2A1) (Homo sapiens (Human)).